The following is a 719-amino-acid chain: MIYQGNRITVSLLDDGIANMQFNAEGESVNKFDAETNKQFDEAVSALEKADNVKGLIVTSSKGVFIAGADITEFVSHFNKEAAEIEKWIVDINGVFNRFEDLPFPKVAAINGAALGGGCEMTLVCEYRVMGDKAQIGLPETQLGIFPGFGGSVRTPRVIGIDNAVELIATGKAQKPAEALKLGLVDAVVAQDDLQEAAVDLVKKCIAGDLDWQAKREEKLQPVKLNQLEQTMAFSTAKAAIFAKANPKQYPAPAIAIETIEKHVNLGRDEAIKVEAAGFAKAAKTPQAESLVGLFLNDQTVKKLAKQHTKNAHDINEAAVLGAGIMGGGIAYQAASKGLPIIMKDIKSEQLDLGMGEASKLLGKMVERKKMTPAQMGETLSRIRPTLNYGDFGETDIVIEAVVENPKVKHAVLKEVEGLVKDNAILASNTSTISITYLATVLERPENFVGMHFFNPVHRMPLVEVIRGEKSSEEAIATTVALAQRMGKVPVVVNDCPGFLVNRVLFPYFGAFDLLLKQGADFVHVDKVMEKFGWPMGPAYLIDVVGLDTGVHGAEVMAEGFPDRMKPDYKGAIKHLFENNRLGQKNGVGFYKYEKDSRGKPKKTADDATYALLKDTTDTDNQQFDDQTIIDRMMLAFCNETVRCLEDNIVATPSEADMAMIMGVGFPAFRGGPCRYIDQVGLDNYLALCEKYAHLGKAYEAPQKIRDMAAAGETFYPKA.

Residues 1–190 (MIYQGNRITV…KLGLVDAVVA (190 aa)) form an enoyl-CoA hydratase/isomerase region. Residue aspartate 298 participates in substrate binding. The segment at 313 to 719 (HDINEAAVLG…AAGETFYPKA (407 aa)) is 3-hydroxyacyl-CoA dehydrogenase. Residues methionine 326, aspartate 345, 402–404 (VVE), lysine 409, and serine 431 each bind NAD(+). Histidine 452 acts as the For 3-hydroxyacyl-CoA dehydrogenase activity in catalysis. Asparagine 455 contacts NAD(+). A substrate-binding site is contributed by asparagine 502.

The protein in the N-terminal section; belongs to the enoyl-CoA hydratase/isomerase family. In the C-terminal section; belongs to the 3-hydroxyacyl-CoA dehydrogenase family. In terms of assembly, heterotetramer of two alpha chains (FadB) and two beta chains (FadA).

It catalyses the reaction a (3S)-3-hydroxyacyl-CoA + NAD(+) = a 3-oxoacyl-CoA + NADH + H(+). It carries out the reaction a (3S)-3-hydroxyacyl-CoA = a (2E)-enoyl-CoA + H2O. The catalysed reaction is a 4-saturated-(3S)-3-hydroxyacyl-CoA = a (3E)-enoyl-CoA + H2O. The enzyme catalyses (3S)-3-hydroxybutanoyl-CoA = (3R)-3-hydroxybutanoyl-CoA. It catalyses the reaction a (3Z)-enoyl-CoA = a 4-saturated (2E)-enoyl-CoA. It carries out the reaction a (3E)-enoyl-CoA = a 4-saturated (2E)-enoyl-CoA. It functions in the pathway lipid metabolism; fatty acid beta-oxidation. Its function is as follows. Involved in the aerobic and anaerobic degradation of long-chain fatty acids via beta-oxidation cycle. Catalyzes the formation of 3-oxoacyl-CoA from enoyl-CoA via L-3-hydroxyacyl-CoA. It can also use D-3-hydroxyacyl-CoA and cis-3-enoyl-CoA as substrate. In Psychrobacter sp. (strain PRwf-1), this protein is Fatty acid oxidation complex subunit alpha.